The following is a 920-amino-acid chain: Valine--tRNA ligase (920 aa).

The 'HIGH' region signature appears at 40–50 (PNVTGTLHMGH). A 'KMSKS' region motif is present at residues 522–526 (KMSKS). Residue K525 coordinates ATP. 2 coiled-coil regions span residues 642 to 668 (EWIRTRLQQTIKNAEEALSQYRFDLLA) and 849 to 920 (AGVI…IESL).

The protein belongs to the class-I aminoacyl-tRNA synthetase family. ValS type 1 subfamily. In terms of assembly, monomer.

It localises to the cytoplasm. It carries out the reaction tRNA(Val) + L-valine + ATP = L-valyl-tRNA(Val) + AMP + diphosphate. Its function is as follows. Catalyzes the attachment of valine to tRNA(Val). As ValRS can inadvertently accommodate and process structurally similar amino acids such as threonine, to avoid such errors, it has a 'posttransfer' editing activity that hydrolyzes mischarged Thr-tRNA(Val) in a tRNA-dependent manner. The chain is Valine--tRNA ligase from Coxiella burnetii (strain RSA 493 / Nine Mile phase I).